Here is a 329-residue protein sequence, read N- to C-terminus: Sorting assembly machinery 35 kDa subunit (329 aa).

Component of the mitochondrial outer membrane sorting assembly machinery (SAM or TOB) complex, which at least consists of SAM35, SAM37 and SAM50.

It is found in the mitochondrion outer membrane. In terms of biological role, essential component of the mitochondrial outer membrane sorting assembly machinery (SAM or TOB) complex, which is required for the sorting of proteins with complicated topology, such as beta-barrel proteins, to the mitochondrial outer membrane after import by the TOM complex. The protein is Sorting assembly machinery 35 kDa subunit (SAM35) of Saccharomyces cerevisiae (strain ATCC 204508 / S288c) (Baker's yeast).